The sequence spans 134 residues: Interleukin-5 (134 aa).

The N-terminal stretch at 1-19 (MRMLLHLSLLALGAAYVSA) is a signal peptide. Asn-76 and Asn-90 each carry an N-linked (GlcNAc...) asparagine glycan.

The protein belongs to the IL-5 family. Homodimer; disulfide-linked. Interacts with IL5RA. Interacts with CSF2RB.

Its subcellular location is the secreted. Functionally, homodimeric cytokine expressed predominantly by T-lymphocytes and NK cells that plays an important role in the survival, differentiation, and chemotaxis of eosinophils. Also acts on activated and resting B-cells to induce immunoglobulin production, growth, and differentiation. Mechanistically, exerts its biological effects through a receptor composed of IL5RA subunit and the cytokine receptor common subunit beta/CSF2RB. Binding to the receptor leads to activation of various kinases including LYN, SYK and JAK2 and thereby propagates signals through the RAS-MAPK and JAK-STAT5 pathways respectively. This Felis catus (Cat) protein is Interleukin-5 (IL5).